The primary structure comprises 286 residues: Polyamine aminopropyltransferase (286 aa).

The region spanning 5–238 (TMWHETLHDQ…GIMTFAWATD (234 aa)) is the PABS domain. Glutamine 33 serves as a coordination point for S-methyl-5'-thioadenosine. Positions 64 and 88 each coordinate spermidine. S-methyl-5'-thioadenosine contacts are provided by residues glutamate 108 and 140-141 (DG). The active-site Proton acceptor is the aspartate 158. 158–161 (DCTD) is a binding site for spermidine. An S-methyl-5'-thioadenosine-binding site is contributed by proline 165.

It belongs to the spermidine/spermine synthase family. As to quaternary structure, homodimer or homotetramer.

The protein localises to the cytoplasm. The catalysed reaction is S-adenosyl 3-(methylsulfanyl)propylamine + putrescine = S-methyl-5'-thioadenosine + spermidine + H(+). Its pathway is amine and polyamine biosynthesis; spermidine biosynthesis; spermidine from putrescine: step 1/1. Its function is as follows. Catalyzes the irreversible transfer of a propylamine group from the amino donor S-adenosylmethioninamine (decarboxy-AdoMet) to putrescine (1,4-diaminobutane) to yield spermidine. The sequence is that of Polyamine aminopropyltransferase from Salmonella schwarzengrund (strain CVM19633).